A 440-amino-acid chain; its full sequence is Beta-1,3-galactosyl-O-glycosyl-glycoprotein beta-1,6-N-acetylglucosaminyltransferase 3 (440 aa).

Over 1–12 (MKMTGWKKKLCR) the chain is Cytoplasmic. Residues 13-30 (GHHLWALGCYMLLAVVAL) form a helical; Signal-anchor for type II membrane protein membrane-spanning segment. Over 31-440 (RLSLRLKCDV…RHKAIYGTEL (410 aa)) the chain is Lumenal. Asparagine 72 and asparagine 108 each carry an N-linked (GlcNAc...) asparagine glycan. Cystine bridges form between cysteine 73-cysteine 230, cysteine 164-cysteine 384, cysteine 185-cysteine 212, and cysteine 393-cysteine 425.

This sequence belongs to the glycosyltransferase 14 family. Post-translationally, N-glycosylated. In terms of tissue distribution, primarily expressed in mucus-secreting tissues.

Its subcellular location is the golgi apparatus membrane. It catalyses the reaction a 3-O-[beta-D-galactosyl-(1-&gt;3)-N-acetyl-alpha-D-galactosaminyl]-L-seryl-[protein] + UDP-N-acetyl-alpha-D-glucosamine = 3-O-{beta-D-galactosyl-(1-&gt;3)-[N-acetyl-beta-D-glucosaminyl-(1-&gt;6)]-N-acetyl-alpha-D-galactosaminyl}-L-seryl-[protein] + UDP + H(+). The catalysed reaction is a 3-O-[beta-D-galactosyl-(1-&gt;3)-N-acetyl-alpha-D-galactosaminyl]-L-threonyl-[protein] + UDP-N-acetyl-alpha-D-glucosamine = a 3-O-{beta-D-galactosyl-(1-&gt;3)-[N-acetyl-beta-D-glucosaminyl-(1-&gt;6)]-N-acetyl-alpha-D-galactosaminyl}-L-threonyl-[protein] + UDP + H(+). It carries out the reaction a beta-D-Gal-(1-&gt;4)-beta-D-GlcNAc-(1-&gt;3)-beta-D-Gal-(1-&gt;4)-beta-D-GlcNAc derivative + UDP-N-acetyl-alpha-D-glucosamine = a beta-D-Gal-(1-&gt;4)-beta-D-GlcNAc-(1-&gt;3)-[beta-D-GlcNAc-(1-&gt;6)]-beta-D-Gal-(1-&gt;4)-N-acetyl-beta-D-glucosaminyl derivative + UDP + H(+). The enzyme catalyses 3-O-[N-acetyl-beta-D-glucosaminyl-(1-&gt;3)-N-acetyl-alpha-D-galactosaminyl]-L-seryl-[protein] + UDP-N-acetyl-alpha-D-glucosamine = 3-O-[N-acetyl-beta-D-glucosaminyl-(1-&gt;3)-[N-acetyl-beta-D-glucosaminyl-(1-&gt;6)]-N-acetyl-alpha-D-galactosaminyl]-L-seryl-[protein] + UDP + H(+). It catalyses the reaction a 3-O-[N-acetyl-beta-D-glucosaminyl-(1-&gt;3)-N-acetyl-alpha-D-galactosaminyl]-L-threonyl-[protein] + UDP-N-acetyl-alpha-D-glucosamine = 3-O-[N-acetyl-beta-D-glucosaminyl-(1-&gt;3)-[N-acetyl-beta-D-glucosaminyl-(1-&gt;6)]-N-acetyl-alpha-D-galactosaminyl]-L-threonyl-[protein] + UDP + H(+). It functions in the pathway protein modification; protein glycosylation. In terms of biological role, glycosyltransferase that can synthesize all known mucin beta 6 N-acetylglucosaminides. Mediates core 2 and core 4 O-glycan branching, 2 important steps in mucin-type biosynthesis. Also has I-branching enzyme activity by converting linear into branched poly-N-acetyllactosaminoglycans, leading to introduce the blood group I antigen during embryonic development. The sequence is that of Beta-1,3-galactosyl-O-glycosyl-glycoprotein beta-1,6-N-acetylglucosaminyltransferase 3 (GCNT3) from Bos taurus (Bovine).